The chain runs to 3075 residues: Lovastatin nonaketide synthase mokA (3075 aa).

The Ketosynthase family 3 (KS3) domain maps to 49 to 488; it reads NEPIVVVGSG…GTNAHAIIEE (440 aa). Active-site for beta-ketoacyl synthase activity residues include cysteine 222, histidine 361, and histidine 408. The interval 603-945 is acyl and malonyl transferase; the sequence is VFTGQGAQWP…AYLWEQFGIP (343 aa). Serine 697 serves as the catalytic For malonyltransferase activity. Positions 997-1133 are N-terminal hotdog fold; that stretch reads HLLLGKLSEY…GQLVVTLDEG (137 aa). Residues 997–1311 form the PKS/mFAS DH domain; that stretch reads HLLLGKLSEY…FKPFSPPTAS (315 aa). Histidine 1029 serves as the catalytic Proton acceptor; for dehydratase activity. Residues 1029 to 1041 are dehydratase-like; it reads HALQGQVVFPAAG. A C-terminal hotdog fold region spans residues 1156 to 1311; that stretch reads MNRVNINSFY…FKPFSPPTAS (156 aa). Aspartate 1218 (proton donor; for dehydratase activity) is an active-site residue. Residues 1556–1594 form a methyltransferase region; it reads YDLIIASNVLHATPDLEKTMAHARSLLKPGGQMVILEIT. The beta-ketoacyl reductase stretch occupies residues 2176-2470; that stretch reads ALPARIRPID…FKIPERRGKA (295 aa). The Carrier domain maps to 2492 to 2571; the sequence is DQVRQIVIDG…DLADDAAARL (80 aa). Serine 2531 bears the O-(pantetheine 4'-phosphoryl)serine mark. A disordered region spans residues 2582 to 2624; that stretch reads SEGGAETSDNDTSGPEGTDLSASTTITEPSSADEEDEKQEDDN. The segment covering 2591–2611 has biased composition (polar residues); it reads NDTSGPEGTDLSASTTITEPS. Acidic residues predominate over residues 2612 to 2624; sequence SADEEDEKQEDDN. Residues 2633–2989 form a peptide synthetase elongation region; that stretch reads PLSLGQEYAW…AETAEPAPLF (357 aa).

It depends on pantetheine 4'-phosphate as a cofactor.

It carries out the reaction holo-[lovastatin nonaketide synthase] + 9 malonyl-CoA + S-adenosyl-L-methionine + 11 NADPH + 19 H(+) = dihydromonacolin L-[lovastatin nonaketide synthase] + S-adenosyl-L-homocysteine + 9 CO2 + 11 NADP(+) + 9 CoA + 6 H2O. It functions in the pathway polyketide biosynthesis; lovastatin biosynthesis. Nonaketide synthase; part of the gene cluster that mediates the biosynthesis of monakolin K, also known as lovastatin, and which acts as a potent competitive inhibitor of HMG-CoA reductase. Monakolin K biosynthesis is performed in two stages. The first stage is catalyzed by the nonaketide synthase mokA, which belongs to type I polyketide synthases and catalyzes the iterative nine-step formation of the polyketide. This PKS stage is completed by the action of dehydrogenase mokE, which catalyzes the NADPH-dependent reduction of the unsaturated tetra-, penta- and heptaketide intermediates that arise during the mokA-mediated biosynthesis of the nonaketide chain and leads to dihydromonacolin L. Covalently bound dihydromonacolin L is released from mokA by the mokD esterase. Conversion of dihydromonacolin L into monacolin L and then monacolin J is subsequently performed with the participation of molecular oxygen and P450 monoogygenase mokC. Finally, mokF performs the conversion of monacoline J to monacoline K through the addition of the side-chain diketide moiety (2R)-2-methylbutanoate produced by the diketide synthase mokB. In Monascus pilosus (Red mold), this protein is Lovastatin nonaketide synthase mokA.